We begin with the raw amino-acid sequence, 183 residues long: Threonylcarbamoyl-AMP synthase (183 aa).

The region spanning 1-183 is the YrdC-like domain; it reads MNREQIAEAL…LRTNQLFRQG (183 aa).

This sequence belongs to the SUA5 family. TsaC subfamily.

It is found in the cytoplasm. It catalyses the reaction L-threonine + hydrogencarbonate + ATP = L-threonylcarbamoyladenylate + diphosphate + H2O. Its function is as follows. Required for the formation of a threonylcarbamoyl group on adenosine at position 37 (t(6)A37) in tRNAs that read codons beginning with adenine. Catalyzes the conversion of L-threonine, HCO(3)(-)/CO(2) and ATP to give threonylcarbamoyl-AMP (TC-AMP) as the acyladenylate intermediate, with the release of diphosphate. The polypeptide is Threonylcarbamoyl-AMP synthase (Haemophilus influenzae (strain 86-028NP)).